Here is a 547-residue protein sequence, read N- to C-terminus: Apicoplast pyruvate carrier 1 (547 aa).

Residues M1–C33 form a disordered region. Topologically, residues M1 to R45 are cytoplasmic. The span at T21–C33 shows a compositional bias: polar residues. The next 12 helical transmembrane spans lie at W46 to Y66, A126 to A146, V167 to I187, G189 to E209, G212 to L232, L278 to A298, A345 to I365, I385 to G405, G417 to P437, L445 to F465, S467 to G487, and L515 to P535.

This sequence belongs to the major facilitator superfamily. Interacts with apicoplast pyruvate carrier 2.

The protein resides in the plastid. Its subcellular location is the apicoplast. The protein localises to the membrane. Functionally, along with apicoplast pyruvate carrier 2, forms apicoplast pyruvate carrier (APC) complex, which transports pyruvate into the apicoplast and may also transport amino acids like methionine, serine, glycine and tryptophan with low efficiency. Required for maintaining pyruvate-dependent metabolic activities in the apicoplast, such as synthesis of fatty acids, isopentenyl pyrophosphate (IPP), dimethylallyl pyrophosphate (DMAPP) and methylerythritol 4-phosphate (MEP). Required for maintaining the integrity of the apicoplast. Required for normal parasite growth. The chain is Apicoplast pyruvate carrier 1 from Toxoplasma gondii.